A 336-amino-acid polypeptide reads, in one-letter code: tRNA N6-adenosine threonylcarbamoyltransferase (336 aa).

H111, H115, and Y132 together coordinate Fe cation. Substrate contacts are provided by residues 132-136 (YLSGG), D164, D185, and S264. Residue D292 participates in Fe cation binding.

Belongs to the KAE1 / TsaD family. Requires Fe(2+) as cofactor.

Its subcellular location is the cytoplasm. The catalysed reaction is L-threonylcarbamoyladenylate + adenosine(37) in tRNA = N(6)-L-threonylcarbamoyladenosine(37) in tRNA + AMP + H(+). In terms of biological role, required for the formation of a threonylcarbamoyl group on adenosine at position 37 (t(6)A37) in tRNAs that read codons beginning with adenine. Is probably involved in the transfer of the threonylcarbamoyl moiety of threonylcarbamoyl-AMP (TC-AMP) to the N6 group of A37. This is tRNA N6-adenosine threonylcarbamoyltransferase from Sulfurisphaera tokodaii (strain DSM 16993 / JCM 10545 / NBRC 100140 / 7) (Sulfolobus tokodaii).